Consider the following 394-residue polypeptide: S-adenosylmethionine synthase (394 aa).

Position 10 (glutamate 10) interacts with Mg(2+). Histidine 16 is an ATP binding site. Glutamate 44 is a K(+) binding site. Glutamate 57 and glutamine 100 together coordinate L-methionine. ATP-binding positions include 168 to 170 (DGK), 236 to 239 (SGRF), aspartate 247, 253 to 254 (RK), alanine 270, lysine 274, and lysine 278. Position 247 (aspartate 247) interacts with L-methionine. Position 278 (lysine 278) interacts with L-methionine.

The protein belongs to the AdoMet synthase family. Homotetramer. Requires Mn(2+) as cofactor. The cofactor is Mg(2+). Co(2+) is required as a cofactor. It depends on K(+) as a cofactor.

It localises to the cytoplasm. It carries out the reaction L-methionine + ATP + H2O = S-adenosyl-L-methionine + phosphate + diphosphate. Its pathway is amino-acid biosynthesis; S-adenosyl-L-methionine biosynthesis; S-adenosyl-L-methionine from L-methionine: step 1/1. Its function is as follows. Catalyzes the formation of S-adenosylmethionine from methionine and ATP. The reaction comprises two steps that are both catalyzed by the same enzyme: formation of S-adenosylmethionine (AdoMet) and triphosphate, and subsequent hydrolysis of the triphosphate. The chain is S-adenosylmethionine synthase (METK) from Medicago truncatula (Barrel medic).